A 280-amino-acid polypeptide reads, in one-letter code: tRNA dimethylallyltransferase (280 aa).

Residue 9–16 participates in ATP binding; sequence GPTGSGKT. 11-16 is a substrate binding site; it reads TGSGKT. The tract at residues 34-37 is interaction with substrate tRNA; the sequence is DSVS.

This sequence belongs to the IPP transferase family. In terms of assembly, monomer. Requires Mg(2+) as cofactor.

It carries out the reaction adenosine(37) in tRNA + dimethylallyl diphosphate = N(6)-dimethylallyladenosine(37) in tRNA + diphosphate. Functionally, catalyzes the transfer of a dimethylallyl group onto the adenine at position 37 in tRNAs that read codons beginning with uridine, leading to the formation of N6-(dimethylallyl)adenosine (i(6)A). The polypeptide is tRNA dimethylallyltransferase (Acholeplasma laidlawii (strain PG-8A)).